We begin with the raw amino-acid sequence, 206 residues long: Small ribosomal subunit protein uS4 (206 aa).

An S4 RNA-binding domain is found at 96–156; it reads CRLDNVVYRM…EKAKNQLRIV (61 aa).

Belongs to the universal ribosomal protein uS4 family. In terms of assembly, part of the 30S ribosomal subunit. Contacts protein S5. The interaction surface between S4 and S5 is involved in control of translational fidelity.

Its function is as follows. One of the primary rRNA binding proteins, it binds directly to 16S rRNA where it nucleates assembly of the body of the 30S subunit. In terms of biological role, with S5 and S12 plays an important role in translational accuracy. In Pseudomonas fluorescens (strain ATCC BAA-477 / NRRL B-23932 / Pf-5), this protein is Small ribosomal subunit protein uS4.